The sequence spans 1024 residues: MKFFALFIQRPVATTLLTLAITLSGIIGFSLLPVSPLPQVDYPVIMVSASMPGADPETMASSVATPLERALGRIAGVNEMTSTSSLGSTRIILQFDLNRDINGAARDVQAALNAAQSLLPSGMPSRPTYRKMNPSDAPIMIMTLTSDTFSQGQLYDYASTKLAQKIAQTEGVSDVTVGGSSLPAVRVELNPSALFNQGVSLDAVRQAISAANVRRPQGSVDAAETHWQVQANDEIKTAEGYRPLIVHYNNGSPVRLQDVANVIDSVQDVRNAGMSAGQPAVLLVISREPGANIIATVDRIRAELPALRASIPASIQLNIAQDRSPTIRASLDEVERSLVIAVALVILVVFIFLRSGRATLIPAVAVPVSLIGTFAAMYLCGFSLNNLSLMALTIATGFVVDDAIVVLENISRHLEAGVKPKVAALRGVREVGFTVLSMSISLVAVFIPLLLMAGLPGRLFREFAVTLSVAIGISLVISLTLTPMMCAWLLRSHPKGQQQRIRGFGKVLLAIQQGYGRSLNWALSHTRWVMVVLLSTIALNVWLYISIPKTFFPEQDTGRMMGFIQADQSISFQSMQQKLKDFMQIVGADPAVDSVTGFTGGSRTNSGSMFISLKPLSERQETAQQVITRLRGKLAKEPGANLFLSSVQDIRVGGRHSNAAYQFTLLADDLAALREWEPKVRAALAKLPQLADVNSDQQDKGAEMALTYDRETMARLGIDVSEANALLNNAFGQRQISTIYQPLNQYKVVMEVAPEYTQDVSSLDKMFVINSNGQSIPLSYFAKWQPANAPLAVNHQGLSAASTISFNLPDGGSLSEATAAVERAMTELGVPSTVRGAFAGTAQVFQETLKSQLWLIMAAIATVYIVLGILYESYVHPLTILSTLPSAGVGALLALELFDAPFSLIALIGIMLLIGIVKKNAIMMVDFALDAQRNGNISAREAIFQASLLRFRPIIMTTLAALFGALPLVLSSGDGAELRQPLGITIVGGLVVSQLLTLYTTPVIYLYFDRLRNRFSKQPLMKLE.

Transmembrane regions (helical) follow at residues 12-32 (VATT…FSLL), 333-353 (EVER…FIFL), 360-380 (LIPA…MYLC), 387-407 (LSLM…IVVL), 435-455 (VLSM…MAGL), 469-489 (VAIG…CAWL), 528-548 (WVMV…ISIP), 853-873 (LWLI…LYES), 875-895 (VHPL…LLAL), 897-917 (LFDA…IGIV), 953-973 (PIIM…LSSG), and 984-1004 (ITIV…TPVI).

It belongs to the resistance-nodulation-cell division (RND) (TC 2.A.6) family. MdtC subfamily. Part of a tripartite efflux system composed of MdtA, MdtB and MdtC. MdtC forms a heteromultimer with MdtB.

It is found in the cell inner membrane. The polypeptide is Multidrug resistance protein MdtC (Yersinia pestis bv. Antiqua (strain Antiqua)).